Reading from the N-terminus, the 102-residue chain is MYAVIKTGGKQYRVAEGQKLRVEKLVGNAGDKVTFSEVLLVGGDSPKIGKPLVSGASVAAEITGQDRGKKIVVFKFRRRKNYRRKNGHRQPYTELKITGITA.

The protein belongs to the bacterial ribosomal protein bL21 family. In terms of assembly, part of the 50S ribosomal subunit. Contacts protein L20.

Its function is as follows. This protein binds to 23S rRNA in the presence of protein L20. This is Large ribosomal subunit protein bL21 from Sorangium cellulosum (strain So ce56) (Polyangium cellulosum (strain So ce56)).